The primary structure comprises 124 residues: Small ribosomal subunit protein uS12 (124 aa).

Asp-89 is modified (3-methylthioaspartic acid). Residues 104 to 124 form a disordered region; sequence TAGVKDRRQSRSKYGAKTPKE.

This sequence belongs to the universal ribosomal protein uS12 family. As to quaternary structure, part of the 30S ribosomal subunit. Contacts proteins S8 and S17. May interact with IF1 in the 30S initiation complex.

In terms of biological role, with S4 and S5 plays an important role in translational accuracy. Its function is as follows. Interacts with and stabilizes bases of the 16S rRNA that are involved in tRNA selection in the A site and with the mRNA backbone. Located at the interface of the 30S and 50S subunits, it traverses the body of the 30S subunit contacting proteins on the other side and probably holding the rRNA structure together. The combined cluster of proteins S8, S12 and S17 appears to hold together the shoulder and platform of the 30S subunit. The sequence is that of Small ribosomal subunit protein uS12 from Parasynechococcus marenigrum (strain WH8102).